A 247-amino-acid polypeptide reads, in one-letter code: Cell division protein ZapD (247 aa).

It belongs to the ZapD family. Interacts with FtsZ.

The protein resides in the cytoplasm. Cell division factor that enhances FtsZ-ring assembly. Directly interacts with FtsZ and promotes bundling of FtsZ protofilaments, with a reduction in FtsZ GTPase activity. The sequence is that of Cell division protein ZapD from Klebsiella pneumoniae (strain 342).